Reading from the N-terminus, the 185-residue chain is Ribosome-recycling factor (185 aa).

It belongs to the RRF family.

Its subcellular location is the cytoplasm. Its function is as follows. Responsible for the release of ribosomes from messenger RNA at the termination of protein biosynthesis. May increase the efficiency of translation by recycling ribosomes from one round of translation to another. In Azotobacter vinelandii (strain DJ / ATCC BAA-1303), this protein is Ribosome-recycling factor.